The sequence spans 525 residues: GMP synthase [glutamine-hydrolyzing] (525 aa).

Residues 16 to 205 (PVLVVDFGAQ…LHDFAGIGAR (190 aa)) enclose the Glutamine amidotransferase type-1 domain. The active-site Nucleophile is the Cys-93. Residues His-179 and Glu-181 contribute to the active site. Residues 206–399 (WTPANIANAL…LGLPEEIVAR (194 aa)) enclose the GMPS ATP-PPase domain. 233–239 (SGGVDSA) is an ATP binding site.

In terms of assembly, homodimer.

It catalyses the reaction XMP + L-glutamine + ATP + H2O = GMP + L-glutamate + AMP + diphosphate + 2 H(+). The protein operates within purine metabolism; GMP biosynthesis; GMP from XMP (L-Gln route): step 1/1. In terms of biological role, catalyzes the synthesis of GMP from XMP. This Mycobacterium marinum (strain ATCC BAA-535 / M) protein is GMP synthase [glutamine-hydrolyzing].